Here is a 104-residue protein sequence, read N- to C-terminus: Succinate dehydrogenase assembly factor 4, mitochondrial (104 aa).

Residues 1-30 (MVSTTLSVSRMTFVWRAARPSLLNHSLRKM) constitute a mitochondrion transit peptide. The disordered stretch occupies residues 29–104 (KMSYQEGKPE…WERKGRCIDF (76 aa)). Basic and acidic residues-rich tracts occupy residues 63–83 (EREP…EKGG) and 91–104 (RYGD…CIDF).

It belongs to the SDHAF4 family. In terms of assembly, interacts with Sdha in its FAD-bound form.

It is found in the mitochondrion matrix. Functionally, plays an essential role in the assembly of succinate dehydrogenase (SDH), an enzyme complex (also referred to as respiratory complex II) that is a component of both the tricarboxylic acid (TCA) cycle and the mitochondrial electron transport chain, and which couples the oxidation of succinate to fumarate with the reduction of ubiquinone (coenzyme Q) to ubiquinol. Binds to the flavoprotein subunit Sdha in its FAD-bound form, blocking the generation of excess reactive oxygen species (ROS) and facilitating its assembly with the iron-sulfur protein subunit Sdhb into the SDH catalytic dimer. This Mus musculus (Mouse) protein is Succinate dehydrogenase assembly factor 4, mitochondrial.